The sequence spans 561 residues: Serine palmitoyltransferase 2 (561 aa).

A helical transmembrane segment spans residues 57–77; sequence PYYISLLTYLNYLILIILGHV. An N6-(pyridoxal phosphate)lysine modification is found at lysine 366. A helical transmembrane segment spans residues 443 to 463; that stretch reads LGFIVYGVADSPVIPLLLYCP.

This sequence belongs to the class-II pyridoxal-phosphate-dependent aminotransferase family. In terms of assembly, LCB1 and LCB2 encode essential subunits of the enzyme and form a heterodimer. Component of the SPOTS complex, at least composed of LCB1/2 (LCB1 and/or LCB2), ORM1/2 (ORM1 and/or ORM2), SAC1 and TSC3. Interacts with LCB1 and TSC3. It depends on pyridoxal 5'-phosphate as a cofactor.

The protein resides in the cytoplasm. Its subcellular location is the endoplasmic reticulum. The protein localises to the membrane. The enzyme catalyses L-serine + hexadecanoyl-CoA + H(+) = 3-oxosphinganine + CO2 + CoA. The protein operates within lipid metabolism; sphingolipid metabolism. In terms of biological role, catalytic subunit of serine palmitoyltransferase (SPT), which catalyzes the committed step in the synthesis of sphingolipids, the condensation of serine with palmitoyl CoA to form the long chain base 3-ketosphinganine. The sequence is that of Serine palmitoyltransferase 2 (LCB2) from Saccharomyces cerevisiae (strain ATCC 204508 / S288c) (Baker's yeast).